Consider the following 226-residue polypeptide: Ribonuclease 3 (226 aa).

An RNase III domain is found at 6 to 128; the sequence is INRLQRKLGY…LIGGIFLDSD (123 aa). Glu41 contacts Mg(2+). The active site involves Asp45. 2 residues coordinate Mg(2+): Asp114 and Glu117. The active site involves Glu117. In terms of domain architecture, DRBM spans 155–225; that stretch reads DPKTRLQEFL…AEQALKQLEL (71 aa).

It belongs to the ribonuclease III family. Homodimer. Requires Mg(2+) as cofactor.

The protein localises to the cytoplasm. The enzyme catalyses Endonucleolytic cleavage to 5'-phosphomonoester.. Digests double-stranded RNA. Involved in the processing of primary rRNA transcript to yield the immediate precursors to the large and small rRNAs (23S and 16S). Processes some mRNAs, and tRNAs when they are encoded in the rRNA operon. Processes pre-crRNA and tracrRNA of type II CRISPR loci if present in the organism. This Edwardsiella ictaluri (strain 93-146) protein is Ribonuclease 3.